Consider the following 275-residue polypeptide: Large ribosomal subunit protein uL2 (275 aa).

A disordered region spans residues 224-257 (AMNPIDHPHGGGEGRTAAGRDPVSPWGTPTKGFR).

It belongs to the universal ribosomal protein uL2 family. As to quaternary structure, part of the 50S ribosomal subunit. Forms a bridge to the 30S subunit in the 70S ribosome.

In terms of biological role, one of the primary rRNA binding proteins. Required for association of the 30S and 50S subunits to form the 70S ribosome, for tRNA binding and peptide bond formation. It has been suggested to have peptidyltransferase activity; this is somewhat controversial. Makes several contacts with the 16S rRNA in the 70S ribosome. The polypeptide is Large ribosomal subunit protein uL2 (Burkholderia mallei (strain NCTC 10247)).